Consider the following 125-residue polypeptide: Small ribosomal subunit protein uS13 (125 aa).

Belongs to the universal ribosomal protein uS13 family. In terms of assembly, part of the 30S ribosomal subunit. Forms a loose heterodimer with protein S19. Forms two bridges to the 50S subunit in the 70S ribosome.

In terms of biological role, located at the top of the head of the 30S subunit, it contacts several helices of the 16S rRNA. In the 70S ribosome it contacts the 23S rRNA (bridge B1a) and protein L5 of the 50S subunit (bridge B1b), connecting the 2 subunits; these bridges are implicated in subunit movement. Contacts the tRNAs in the A and P-sites. This Rickettsia rickettsii (strain Iowa) protein is Small ribosomal subunit protein uS13.